The following is a 207-amino-acid chain: Thiamine-phosphate synthase (207 aa).

4-amino-2-methyl-5-(diphosphooxymethyl)pyrimidine is bound by residues 35 to 39 (QYRDK) and N67. Residues D68 and D86 each contribute to the Mg(2+) site. 4-amino-2-methyl-5-(diphosphooxymethyl)pyrimidine is bound at residue T105. Residue 132–134 (SVT) participates in 2-[(2R,5Z)-2-carboxy-4-methylthiazol-5(2H)-ylidene]ethyl phosphate binding. 4-amino-2-methyl-5-(diphosphooxymethyl)pyrimidine is bound at residue K135. G162 contacts 2-[(2R,5Z)-2-carboxy-4-methylthiazol-5(2H)-ylidene]ethyl phosphate.

It belongs to the thiamine-phosphate synthase family. Mg(2+) serves as cofactor.

It carries out the reaction 2-[(2R,5Z)-2-carboxy-4-methylthiazol-5(2H)-ylidene]ethyl phosphate + 4-amino-2-methyl-5-(diphosphooxymethyl)pyrimidine + 2 H(+) = thiamine phosphate + CO2 + diphosphate. The catalysed reaction is 2-(2-carboxy-4-methylthiazol-5-yl)ethyl phosphate + 4-amino-2-methyl-5-(diphosphooxymethyl)pyrimidine + 2 H(+) = thiamine phosphate + CO2 + diphosphate. It catalyses the reaction 4-methyl-5-(2-phosphooxyethyl)-thiazole + 4-amino-2-methyl-5-(diphosphooxymethyl)pyrimidine + H(+) = thiamine phosphate + diphosphate. It functions in the pathway cofactor biosynthesis; thiamine diphosphate biosynthesis; thiamine phosphate from 4-amino-2-methyl-5-diphosphomethylpyrimidine and 4-methyl-5-(2-phosphoethyl)-thiazole: step 1/1. Condenses 4-methyl-5-(beta-hydroxyethyl)thiazole monophosphate (THZ-P) and 2-methyl-4-amino-5-hydroxymethyl pyrimidine pyrophosphate (HMP-PP) to form thiamine monophosphate (TMP). The sequence is that of Thiamine-phosphate synthase from Pseudomonas putida (strain GB-1).